A 317-amino-acid chain; its full sequence is Melanocyte-stimulating hormone receptor (317 aa).

The Extracellular portion of the chain corresponds to 1–37 (MPAQGSQRSXLGSLNSTLMATPSLGLAANQSGPQCLE). Residues asparagine 15 and asparagine 29 are each glycosylated (N-linked (GlcNAc...) asparagine). A helical membrane pass occupies residues 38 to 63 (VSVPDGLFLCLGLVSLVENMLVVAAI). Residues 64–72 (AKNRNLHSP) lie on the Cytoplasmic side of the membrane. Residues 73–93 (MYCFICCLALSDLLVSISNVL) form a helical membrane-spanning segment. Over 94–118 (ETAVMLLLEAGALAVGATVVQQLDN) the chain is Extracellular. The chain crosses the membrane as a helical span at residues 119-140 (VIDVLICSSMVSSLCFLGAIAM). Residues 141-163 (DRYISIFYALRYHSIVTLSRAQW) lie on the Cytoplasmic side of the membrane. The helical transmembrane segment at 164–183 (ATAAVWAASILSSTLFIAYY) threads the bilayer. Residues 184 to 191 (DRTVVLLC) lie on the Extracellular side of the membrane. A helical transmembrane segment spans residues 192-211 (LVVFFLAMLVLMAVLYAHML). Residues 212-240 (TQACQHVQGITRLHKRQHLVQQGFGLKGA) lie on the Cytoplasmic side of the membrane. Residues 241–266 (ATLTILLGVFLLCWGPFFLHLTLIAV) traverse the membrane as a helical segment. The Extracellular segment spans residues 267–279 (CPQHPTCSCVFKN). Residues 280–300 (FKLFLALIICNAIVDPLIYAF) traverse the membrane as a helical segment. Residues 301-317 (RSQELRKTLKEVLLFSW) lie on the Cytoplasmic side of the membrane.

This sequence belongs to the G-protein coupled receptor 1 family. In terms of assembly, interacts with MGRN1, but does not undergo MGRN1-mediated ubiquitination; this interaction competes with GNAS-binding and thus inhibits agonist-induced cAMP production. Interacts with OPN3; the interaction results in a decrease in MC1R-mediated cAMP signaling and ultimately a decrease in melanin production in melanocytes.

The protein localises to the cell membrane. Receptor for MSH (alpha, beta and gamma) and ACTH. The activity of this receptor is mediated by G proteins which activate adenylate cyclase. Mediates melanogenesis, the production of eumelanin (black/brown) and phaeomelanin (red/yellow), via regulation of cAMP signaling in melanocytes. In Galago senegalensis (Northern lesser bushbaby), this protein is Melanocyte-stimulating hormone receptor (MC1R).